Here is a 427-residue protein sequence, read N- to C-terminus: Tol-Pal system protein TolB (427 aa).

The N-terminal stretch at 1-23 (MKLIARLMSMCAVLFFAINSAYA) is a signal peptide.

This sequence belongs to the TolB family. As to quaternary structure, the Tol-Pal system is composed of five core proteins: the inner membrane proteins TolA, TolQ and TolR, the periplasmic protein TolB and the outer membrane protein Pal. They form a network linking the inner and outer membranes and the peptidoglycan layer.

Its subcellular location is the periplasm. Its function is as follows. Part of the Tol-Pal system, which plays a role in outer membrane invagination during cell division and is important for maintaining outer membrane integrity. This Actinobacillus succinogenes (strain ATCC 55618 / DSM 22257 / CCUG 43843 / 130Z) protein is Tol-Pal system protein TolB.